Here is a 133-residue protein sequence, read N- to C-terminus: Small ribosomal subunit protein uS8 (133 aa).

It belongs to the universal ribosomal protein uS8 family. Part of the 30S ribosomal subunit. Contacts proteins S5 and S12.

Its function is as follows. One of the primary rRNA binding proteins, it binds directly to 16S rRNA central domain where it helps coordinate assembly of the platform of the 30S subunit. The chain is Small ribosomal subunit protein uS8 from Synechococcus sp. (strain CC9605).